The primary structure comprises 151 residues: Deoxyuridine 5'-triphosphate nucleotidohydrolase (151 aa).

Substrate contacts are provided by residues 70–72 (RSG), Asn-83, 87–89 (LID), and Met-97.

The protein belongs to the dUTPase family. Mg(2+) is required as a cofactor.

The enzyme catalyses dUTP + H2O = dUMP + diphosphate + H(+). It functions in the pathway pyrimidine metabolism; dUMP biosynthesis; dUMP from dCTP (dUTP route): step 2/2. Its function is as follows. This enzyme is involved in nucleotide metabolism: it produces dUMP, the immediate precursor of thymidine nucleotides and it decreases the intracellular concentration of dUTP so that uracil cannot be incorporated into DNA. The polypeptide is Deoxyuridine 5'-triphosphate nucleotidohydrolase (Hamiltonella defensa subsp. Acyrthosiphon pisum (strain 5AT)).